A 78-amino-acid chain; its full sequence is MEKKIIFLCFFVSLLTLPEFISSQVLVEDDVPFPEKKFADRGECIRACAAKFTDGDLSKIKDVLPRYYKCVCWYYPTS.

The signal sequence occupies residues 1-23; that stretch reads MEKKIIFLCFFVSLLTLPEFISS. The interval 34–37 is important for inhibition of KCNQ4; sequence PEKK. Intrachain disulfides connect Cys-44-Cys-70 and Cys-48-Cys-72.

Belongs to the SLPTX(15) family. Expressed by the venom gland.

It localises to the secreted. This chain is U-scoloptoxin(15)-Ssm2a, found in Scolopendra mutilans (Chinese red-headed centipede).